A 276-amino-acid polypeptide reads, in one-letter code: Type II pantothenate kinase (276 aa).

8 to 15 contacts ATP; that stretch reads DAGGTLTK. The Proton acceptor role is filled by glutamate 76. ATP contacts are provided by residues threonine 105, 127 to 131, phenylalanine 143, and serine 230; that span reads GGTIM.

This sequence belongs to the type II pantothenate kinase family. In terms of assembly, homodimer.

The protein resides in the cytoplasm. The enzyme catalyses (R)-pantothenate + ATP = (R)-4'-phosphopantothenate + ADP + H(+). Its pathway is cofactor biosynthesis; coenzyme A biosynthesis; CoA from (R)-pantothenate: step 1/5. Catalyzes the phosphorylation of pantothenate (Pan), the first step in CoA biosynthesis. The polypeptide is Type II pantothenate kinase (Bacillus cereus (strain ATCC 10987 / NRS 248)).